We begin with the raw amino-acid sequence, 184 residues long: Large ribosomal subunit protein uL15 (184 aa).

A disordered region spans residues 1 to 45 (MDLSSLRPAKGAVKNKKRVGRGQGSGNGTTAGKGNNGQQSRSGYK). Positions 21–35 (RGQGSGNGTTAGKGN) are enriched in gly residues.

The protein belongs to the universal ribosomal protein uL15 family. In terms of assembly, part of the 50S ribosomal subunit.

In terms of biological role, binds to the 23S rRNA. This is Large ribosomal subunit protein uL15 from Pelodictyon phaeoclathratiforme (strain DSM 5477 / BU-1).